We begin with the raw amino-acid sequence, 156 residues long: Small ribosomal subunit protein uS7 (156 aa).

The protein belongs to the universal ribosomal protein uS7 family. In terms of assembly, part of the 30S ribosomal subunit. Contacts proteins S9 and S11.

Functionally, one of the primary rRNA binding proteins, it binds directly to 16S rRNA where it nucleates assembly of the head domain of the 30S subunit. Is located at the subunit interface close to the decoding center, probably blocks exit of the E-site tRNA. The protein is Small ribosomal subunit protein uS7 of Sorangium cellulosum (strain So ce56) (Polyangium cellulosum (strain So ce56)).